The following is a 509-amino-acid chain: Hexokinase-4, chloroplastic (509 aa).

Residues 1–37 (MSAAAAIASPIPAAIAVVQQQRRGRSRGGGSGAAAVR) constitute a chloroplast transit peptide. The Hexokinase domain occupies 45-496 (SAIAPILADL…SGIGAALLAA (452 aa)). The hexokinase small subdomain stretch occupies residues 100-238 (TGNETGLFYA…GLDMRVSALV (139 aa)). Positions 114, 115, and 116 each coordinate ADP. The D-glucose site is built by Thr-204, Lys-205, Asn-239, and Asp-240. The hexokinase large subdomain stretch occupies residues 239-485 (NDTVGTLAGA…NRIAIEHTKD (247 aa)). Residue Thr-263 participates in ADP binding. D-glucose contacts are provided by Asn-266, Glu-294, and Glu-324. Gly-450 contributes to the ADP binding site.

Belongs to the hexokinase family. Expressed in roots, leaves, flowers, immature seeds, endosperm and seed coat.

The protein localises to the plastid. The protein resides in the chloroplast stroma. The catalysed reaction is a D-hexose + ATP = a D-hexose 6-phosphate + ADP + H(+). The enzyme catalyses D-fructose + ATP = D-fructose 6-phosphate + ADP + H(+). It carries out the reaction D-glucose + ATP = D-glucose 6-phosphate + ADP + H(+). It functions in the pathway carbohydrate metabolism; hexose metabolism. Its pathway is carbohydrate degradation; glycolysis; D-glyceraldehyde 3-phosphate and glycerone phosphate from D-glucose: step 1/4. Its function is as follows. Fructose and glucose phosphorylating enzyme. The protein is Hexokinase-4, chloroplastic (HXK4) of Oryza sativa subsp. japonica (Rice).